A 167-amino-acid chain; its full sequence is Transmembrane protein 229B (167 aa).

At 1 to 14 the chain is on the cytoplasmic side; it reads MASAEPLTALSRWY. A helical transmembrane segment spans residues 15–35; it reads LYAIHGYFCEVMFTAAWEFVV. Over 36 to 40 the chain is Extracellular; sequence NLNWK. The chain crosses the membrane as a helical span at residues 41–61; it reads FPGVTSVWALFIYGTSILIVE. The Cytoplasmic segment spans residues 62–73; it reads RMYLRLRGRCPL. The chain crosses the membrane as a helical span at residues 74–94; sequence LLRCLIYTLWTYLWEFTTGFI. The Extracellular segment spans residues 95 to 109; the sequence is LRQFNACPWDYSQFD. Residues 110–130 form a helical membrane-spanning segment; it reads FDFMGLITLEYAVPWFCGALI. At 131-167 the chain is on the cytoplasmic side; the sequence is MEQFIIRNTLRLRFDKDAEPGEPSGALALANGHVKTD.

It belongs to the TMEM229 family.

It is found in the membrane. The sequence is that of Transmembrane protein 229B (TMEM229B) from Homo sapiens (Human).